Reading from the N-terminus, the 119-residue chain is Large ribosomal subunit protein uL18 (119 aa).

The protein belongs to the universal ribosomal protein uL18 family. Part of the 50S ribosomal subunit; part of the 5S rRNA/L5/L18/L25 subcomplex. Contacts the 5S and 23S rRNAs.

In terms of biological role, this is one of the proteins that bind and probably mediate the attachment of the 5S RNA into the large ribosomal subunit, where it forms part of the central protuberance. This chain is Large ribosomal subunit protein uL18, found in Paracoccus denitrificans (strain Pd 1222).